Consider the following 143-residue polypeptide: Endoribonuclease YbeY (143 aa).

Residues H113, H117, and D123 each contribute to the Zn(2+) site.

The protein belongs to the endoribonuclease YbeY family. The cofactor is Zn(2+).

Its subcellular location is the cytoplasm. Its function is as follows. Single strand-specific metallo-endoribonuclease involved in late-stage 70S ribosome quality control and in maturation of the 3' terminus of the 16S rRNA. This chain is Endoribonuclease YbeY, found in Elusimicrobium minutum (strain Pei191).